The chain runs to 345 residues: Protein-glutamate methylesterase/protein-glutamine glutaminase 1 (345 aa).

One can recognise a Response regulatory domain in the interval S8–E123. A 4-aspartylphosphate modification is found at D59. Residues A151–R344 enclose the CheB-type methylesterase domain. Residues S163, H190, and D286 contribute to the active site.

Belongs to the CheB family. Phosphorylated by CheA. Phosphorylation of the N-terminal regulatory domain activates the methylesterase activity.

It localises to the cytoplasm. It catalyses the reaction [protein]-L-glutamate 5-O-methyl ester + H2O = L-glutamyl-[protein] + methanol + H(+). The catalysed reaction is L-glutaminyl-[protein] + H2O = L-glutamyl-[protein] + NH4(+). In terms of biological role, involved in chemotaxis. Part of a chemotaxis signal transduction system that modulates chemotaxis in response to various stimuli. Catalyzes the demethylation of specific methylglutamate residues introduced into the chemoreceptors (methyl-accepting chemotaxis proteins or MCP) by CheR. Also mediates the irreversible deamidation of specific glutamine residues to glutamic acid. This chain is Protein-glutamate methylesterase/protein-glutamine glutaminase 1, found in Myxococcus xanthus (strain DK1622).